The chain runs to 97 residues: Small ribosomal subunit protein bS6 (97 aa).

This sequence belongs to the bacterial ribosomal protein bS6 family.

Binds together with bS18 to 16S ribosomal RNA. This chain is Small ribosomal subunit protein bS6, found in Listeria monocytogenes serotype 4b (strain CLIP80459).